The following is a 466-amino-acid chain: Gastric inhibitory polypeptide receptor (466 aa).

An N-terminal signal peptide occupies residues 1-21; sequence MTTSPILQLLLRLSLCGLLLQ. Residues 22 to 138 are Extracellular-facing; sequence RAETGSKGQT…DQRLILERLQ (117 aa). 3 disulfides stabilise this stretch: cysteine 46–cysteine 70, cysteine 61–cysteine 103, and cysteine 84–cysteine 118. Residues asparagine 62 and asparagine 77 are each glycosylated (N-linked (GlcNAc...) asparagine). A helical membrane pass occupies residues 139–161; it reads VMYTVGYSLSLATLLLALLILSL. Topologically, residues 162-169 are cytoplasmic; sequence FRRLHCTR. A helical membrane pass occupies residues 170–189; it reads NYIHINLFTSFMLRAAAILS. At 190–217 the chain is on the extracellular side; that stretch reads RDRLLPRPGPYLGDQALALWNQALAACR. A helical transmembrane segment spans residues 218–242; it reads TAQIVTQYCVGANYTWLLVEGVYLH. The Cytoplasmic portion of the chain corresponds to 243–254; sequence SLLVLVGGSEEG. A helical membrane pass occupies residues 255 to 278; that stretch reads HFRYYLLLGWGAPALFVIPWVIVR. Residues 279–293 lie on the Extracellular side of the membrane; sequence YLYENTQCWERNEVK. A helical transmembrane segment spans residues 294–319; the sequence is AIWWIIRTPILMTILINFLIFIRILG. Topologically, residues 320-341 are cytoplasmic; that stretch reads ILLSKLRTRQMRCRDYRLRLAR. A helical membrane pass occupies residues 342 to 362; it reads STLTLVPLLGVHEVVFAPVTE. Over 363–377 the chain is Extracellular; that stretch reads EQARGALRFAKLGFE. The chain crosses the membrane as a helical span at residues 378–398; that stretch reads IFLSSFQGFLVSVLYCFINKE. Topologically, residues 399–466 are cytoplasmic; the sequence is VQSEIRRGWH…EASRELESYC (68 aa). Positions 427 to 466 are disordered; it reads AFRALPSGSGPGEVPTSRGLSSGTLPGPGNEASRELESYC.

Belongs to the G-protein coupled receptor 2 family. As to quaternary structure, may form homodimers and heterodimers with GLP1R. In terms of processing, N-glycosylation is required for cell surface expression and lengthens receptor half-life by preventing degradation in the ER.

The protein localises to the cell membrane. This is a receptor for GIP. The activity of this receptor is mediated by G proteins which activate adenylyl cyclase. The polypeptide is Gastric inhibitory polypeptide receptor (GIPR) (Homo sapiens (Human)).